Reading from the N-terminus, the 117-residue chain is Large ribosomal subunit protein uL18 (117 aa).

The protein belongs to the universal ribosomal protein uL18 family. Part of the 50S ribosomal subunit; part of the 5S rRNA/L5/L18/L25 subcomplex. Contacts the 5S and 23S rRNAs.

Its function is as follows. This is one of the proteins that bind and probably mediate the attachment of the 5S RNA into the large ribosomal subunit, where it forms part of the central protuberance. The sequence is that of Large ribosomal subunit protein uL18 from Blochmanniella pennsylvanica (strain BPEN).